Reading from the N-terminus, the 457-residue chain is Glutamyl-tRNA reductase (457 aa).

Substrate-binding positions include 49–52 (TCNR), serine 109, 114–116 (ETQ), and glutamine 120. Residue cysteine 50 is the Nucleophile of the active site. 189–194 (GAGKMG) serves as a coordination point for NADP(+).

Belongs to the glutamyl-tRNA reductase family. In terms of assembly, homodimer.

The enzyme catalyses (S)-4-amino-5-oxopentanoate + tRNA(Glu) + NADP(+) = L-glutamyl-tRNA(Glu) + NADPH + H(+). The protein operates within porphyrin-containing compound metabolism; protoporphyrin-IX biosynthesis; 5-aminolevulinate from L-glutamyl-tRNA(Glu): step 1/2. In terms of biological role, catalyzes the NADPH-dependent reduction of glutamyl-tRNA(Glu) to glutamate 1-semialdehyde (GSA). The protein is Glutamyl-tRNA reductase of Oceanobacillus iheyensis (strain DSM 14371 / CIP 107618 / JCM 11309 / KCTC 3954 / HTE831).